Reading from the N-terminus, the 174-residue chain is Ribosomal RNA large subunit methyltransferase H (174 aa).

S-adenosyl-L-methionine contacts are provided by residues Leu90, Gly122, and Leu141–Trp146.

The protein belongs to the RNA methyltransferase RlmH family. In terms of assembly, homodimer.

It is found in the cytoplasm. It catalyses the reaction pseudouridine(1915) in 23S rRNA + S-adenosyl-L-methionine = N(3)-methylpseudouridine(1915) in 23S rRNA + S-adenosyl-L-homocysteine + H(+). Specifically methylates the pseudouridine at position 1915 (m3Psi1915) in 23S rRNA. The sequence is that of Ribosomal RNA large subunit methyltransferase H from Brucella melitensis biotype 2 (strain ATCC 23457).